The sequence spans 197 residues: NADH-quinone oxidoreductase subunit C (197 aa).

The protein belongs to the complex I 30 kDa subunit family. As to quaternary structure, NDH-1 is composed of 14 different subunits. Subunits NuoB, C, D, E, F, and G constitute the peripheral sector of the complex.

It localises to the cell inner membrane. It carries out the reaction a quinone + NADH + 5 H(+)(in) = a quinol + NAD(+) + 4 H(+)(out). Its function is as follows. NDH-1 shuttles electrons from NADH, via FMN and iron-sulfur (Fe-S) centers, to quinones in the respiratory chain. The immediate electron acceptor for the enzyme in this species is believed to be ubiquinone. Couples the redox reaction to proton translocation (for every two electrons transferred, four hydrogen ions are translocated across the cytoplasmic membrane), and thus conserves the redox energy in a proton gradient. This Neisseria gonorrhoeae (strain ATCC 700825 / FA 1090) protein is NADH-quinone oxidoreductase subunit C.